We begin with the raw amino-acid sequence, 305 residues long: Zinc transporter ZIP9 (305 aa).

Residues 7–27 (ICLLSLAMLVACYVAGIIPLA) form a helical membrane-spanning segment. Asn-29 is a glycosylation site (N-linked (GlcNAc...) asparagine). 5 consecutive transmembrane segments (helical) span residues 35 to 55 (LKLVTVLGAGLLCGTALAVIV), 104 to 124 (AYIGVSLVLGFVFMLLVDQIG), 144 to 164 (ITTTLGLVVHAAADGVALGAA), 174 to 194 (LIVFVAIMLHKAPAAFGLVSF), and 208 to 228 (HLLVFALAAPVMSMVTYLGLS). An N-linked (GlcNAc...) asparagine glycan is attached at Asn-239. The next 2 helical transmembrane spans lie at 242-262 (GVAMLFSAGTFLYVATVHVLP) and 284-304 (LEVAALVLGCLIPLVLSIGHH).

Belongs to the ZIP transporter (TC 2.A.5) family.

The protein localises to the golgi apparatus. The protein resides in the trans-Golgi network membrane. It localises to the cell membrane. Its subcellular location is the cytoplasm. It is found in the perinuclear region. The protein localises to the mitochondrion. The protein resides in the nucleus. The enzyme catalyses Zn(2+)(in) = Zn(2+)(out). In terms of biological role, transports zinc ions across cell and organelle membranes into the cytoplasm and regulates intracellular zinc homeostasis. Participates in the zinc ions efflux out of the secretory compartments. Regulates intracellular zinc level, resulting in the enhancement of AKT1 and MAPK3/MAPK1 (Erk1/2) phosphorylation in response to the BCR activation. Also functions as a membrane androgen receptor that mediates, through a G protein, the non-classical androgen signaling pathway, characterized by the activation of MAPK3/MAPK1 (Erk1/2) and transcription factors CREB1 or ATF1. Moreover, has dual functions as a membrane-bound androgen receptor and as an androgen-dependent zinc transporter both of which are mediated through an inhibitory G protein (Gi) that mediates both MAP kinase and zinc signaling leading to the androgen-dependent apoptotic process. This Gallus gallus (Chicken) protein is Zinc transporter ZIP9.